The following is a 144-amino-acid chain: Large ribosomal subunit protein uL14 (144 aa).

It belongs to the universal ribosomal protein uL14 family. Part of the 50S ribosomal subunit. Forms a cluster with proteins L3 and L24e, part of which may contact the 16S rRNA in 2 intersubunit bridges.

Functionally, binds to 23S rRNA. Forms part of two intersubunit bridges in the 70S ribosome. This chain is Large ribosomal subunit protein uL14, found in Caldivirga maquilingensis (strain ATCC 700844 / DSM 13496 / JCM 10307 / IC-167).